Consider the following 343-residue polypeptide: Methionine import ATP-binding protein MetN (343 aa).

The region spanning Ile2–Ile241 is the ABC transporter domain. Gly38–Ser45 is an ATP binding site.

Belongs to the ABC transporter superfamily. Methionine importer (TC 3.A.1.24) family. The complex is composed of two ATP-binding proteins (MetN), two transmembrane proteins (MetI) and a solute-binding protein (MetQ).

The protein localises to the cell inner membrane. It carries out the reaction L-methionine(out) + ATP + H2O = L-methionine(in) + ADP + phosphate + H(+). The catalysed reaction is D-methionine(out) + ATP + H2O = D-methionine(in) + ADP + phosphate + H(+). Its function is as follows. Part of the ABC transporter complex MetNIQ involved in methionine import. Responsible for energy coupling to the transport system. This is Methionine import ATP-binding protein MetN from Photorhabdus laumondii subsp. laumondii (strain DSM 15139 / CIP 105565 / TT01) (Photorhabdus luminescens subsp. laumondii).